A 206-amino-acid chain; its full sequence is Large ribosomal subunit protein uL4 (206 aa).

Residues 49 to 73 (KTKTISEISGTTKKPFAQKGGGRAR) form a disordered region.

This sequence belongs to the universal ribosomal protein uL4 family. In terms of assembly, part of the 50S ribosomal subunit.

In terms of biological role, one of the primary rRNA binding proteins, this protein initially binds near the 5'-end of the 23S rRNA. It is important during the early stages of 50S assembly. It makes multiple contacts with different domains of the 23S rRNA in the assembled 50S subunit and ribosome. Its function is as follows. Forms part of the polypeptide exit tunnel. The sequence is that of Large ribosomal subunit protein uL4 from Paramagnetospirillum magneticum (strain ATCC 700264 / AMB-1) (Magnetospirillum magneticum).